Reading from the N-terminus, the 432-residue chain is Sphingosine N-acyltransferase-like protein ALT7 (432 aa).

A helical transmembrane segment spans residues 55 to 75; it reads IGLSLGSLLLLILMFTCLPYY. Asparagine 77 carries an N-linked (GlcNAc...) asparagine glycan. The next 7 membrane-spanning stretches (helical) occupy residues 91–111, 128–148, 172–192, 226–246, 250–270, 273–293, and 338–358; these read FIFS…IYLL, FTEQ…GMYI, GLTK…IVVV, VGNV…FAKL, LGFQ…WLVA, GLYL…MPYG, and AFLG…GMIL. A TLC domain is found at 123–366; that stretch reads KLMVRFTEQG…ILKVAYKVFQ (244 aa). Residues 370-395 form a disordered region; it reads ADDTRSDSEESGYGTSDHEGDCYGAQ.

Belongs to the sphingosine N-acyltransferase family.

The protein localises to the membrane. Its pathway is mycotoxin biosynthesis. Its function is as follows. Sphingosine N-acyltransferase-like protein; part of the gene cluster that mediates the biosynthesis of the host-selective toxins (HSTs) AAL-toxins, sphinganine-analog mycotoxins responsible for Alternaria stem canker on tomato by the tomato pathotype. The biosynthesis starts with the polyketide synthase ALT1-catalyzed C-16 carbon chain assembly from one starter acetyl-CoA unit with malonyl-CoA extender units. ALT1 also selectively transfers methyl groups at the first and the third cycle of chain elongation for AAL toxin. The C-16 polyketide chain is released from the enzyme by a nucleophilic attack of a carbanion, which is derived from R-carbon of glycin by decarboxylation, on the carbonyl carbon of polyketide acyl chain. This step is probably catalyzed by a pyridoxal 5'-phosphate-dependent aminoacyl transferase ALT4. The respective functions of the other enzymes encoded by the cluster have still to be elucidated. The sphingosine N-acyltransferase-like protein ALT7 seems not to act as a resistance/self-tolerance factor against the toxin in the toxin biosynthetic gene cluster, contrary to what is expected. The chain is Sphingosine N-acyltransferase-like protein ALT7 from Alternaria alternata (Alternaria rot fungus).